Consider the following 469-residue polypeptide: Crinkler effector protein 1 (469 aa).

Positions 1–17 are cleaved as a signal peptide; sequence MSITLLCLIKGNTLANA. Residues 18-57 are LQLFLAK-like domain; it reads FPVDIDKDQLVGHLKKVIKAEQPQTFANVDAKDLKLWRVP. The segment at 58–96 is DWL domain; the sequence is ISDDHDDQLRNLSLEDSDELLAIRKISKYFPDSPPEECI. N-linked (GlcNAc...) asparagine glycosylation occurs at asparagine 68. An HVLVXXP motif motif is present at residues 97 to 103; sequence HVLVEPP. N-linked (GlcNAc...) asparagine glycosylation is found at asparagine 126, asparagine 181, and asparagine 248.

This sequence belongs to the Crinkler effector family. Homodimer.

It is found in the secreted. The protein localises to the host nucleus. Functionally, effector that participates in the arbuscule development step of the symbiosis. Arbuscular mycorrhizal (AM) symbiosis is one of the most prominent and beneficial plant-microbe interactions that facilitates mineral nutrition and confers tolerance to biotic and abiotic stresses. Is not involved in cell death processes. The chain is Crinkler effector protein 1 from Rhizophagus irregularis (strain DAOM 181602 / DAOM 197198 / MUCL 43194) (Arbuscular mycorrhizal fungus).